We begin with the raw amino-acid sequence, 532 residues long: Light-independent protochlorophyllide reductase subunit B (532 aa).

A [4Fe-4S] cluster-binding site is contributed by Asp-36. Catalysis depends on Asp-282, which acts as the Proton donor. 417–418 serves as a coordination point for substrate; it reads GL.

Belongs to the ChlB/BchB/BchZ family. In terms of assembly, protochlorophyllide reductase is composed of three subunits; BchL, BchN and BchB. Forms a heterotetramer of two BchB and two BchN subunits. The cofactor is [4Fe-4S] cluster.

The enzyme catalyses chlorophyllide a + oxidized 2[4Fe-4S]-[ferredoxin] + 2 ADP + 2 phosphate = protochlorophyllide a + reduced 2[4Fe-4S]-[ferredoxin] + 2 ATP + 2 H2O. It functions in the pathway porphyrin-containing compound metabolism; bacteriochlorophyll biosynthesis (light-independent). In terms of biological role, component of the dark-operative protochlorophyllide reductase (DPOR) that uses Mg-ATP and reduced ferredoxin to reduce ring D of protochlorophyllide (Pchlide) to form chlorophyllide a (Chlide). This reaction is light-independent. The NB-protein (BchN-BchB) is the catalytic component of the complex. The polypeptide is Light-independent protochlorophyllide reductase subunit B (Methylobacterium radiotolerans (strain ATCC 27329 / DSM 1819 / JCM 2831 / NBRC 15690 / NCIMB 10815 / 0-1)).